The chain runs to 380 residues: tRNA-specific 2-thiouridylase MnmA (380 aa).

Residues 9–16 (GVSGGVDS) and M35 contribute to the ATP site. The tract at residues 94–96 (NPD) is interaction with target base in tRNA. Residue C99 is the Nucleophile of the active site. A disulfide bond links C99 and C195. G123 is an ATP binding site. Positions 145–147 (KDQ) are interaction with tRNA. C195 serves as the catalytic Cysteine persulfide intermediate. Residues 308-309 (RY) form an interaction with tRNA region.

Belongs to the MnmA/TRMU family.

The protein localises to the cytoplasm. It catalyses the reaction S-sulfanyl-L-cysteinyl-[protein] + uridine(34) in tRNA + AH2 + ATP = 2-thiouridine(34) in tRNA + L-cysteinyl-[protein] + A + AMP + diphosphate + H(+). Its function is as follows. Catalyzes the 2-thiolation of uridine at the wobble position (U34) of tRNA, leading to the formation of s(2)U34. In Stenotrophomonas maltophilia (strain K279a), this protein is tRNA-specific 2-thiouridylase MnmA.